A 691-amino-acid polypeptide reads, in one-letter code: Lacticin-481/lactococcin-DR transport/processing ATP-binding protein lcnDR3 (691 aa).

The region spanning 6–130 (QNNEQDCLLA…KKFSGYIITL (125 aa)) is the Peptidase C39 domain. The active site involves C12. The ABC transmembrane type-1 domain maps to 158–434 (TFLYIFSLFI…IQDVMFEISR (277 aa)). Helical transmembrane passes span 159–179 (FLYI…SIIL), 189–209 (ITYS…SLLM), 262–284 (GILL…IIYL), 289–311 (FTLT…SLIS), and 385–405 (ICVI…LVSI). The region spanning 464 to 689 (IILKDISYSY…LLNDSYNSFV (226 aa)) is the ABC transporter domain. 497-504 (GKSGSGKS) serves as a coordination point for ATP.

Belongs to the ABC transporter superfamily.

The protein localises to the cell membrane. Probably implicated in the export process of the lantibiotic lacticin-481/lactococcin-DR. The polypeptide is Lacticin-481/lactococcin-DR transport/processing ATP-binding protein lcnDR3 (lcnDR3) (Lactococcus lactis subsp. lactis (Streptococcus lactis)).